Here is a 156-residue protein sequence, read N- to C-terminus: Small ribosomal subunit protein uS7 (156 aa).

Belongs to the universal ribosomal protein uS7 family. Part of the 30S ribosomal subunit. Contacts proteins S9 and S11.

One of the primary rRNA binding proteins, it binds directly to 16S rRNA where it nucleates assembly of the head domain of the 30S subunit. Is located at the subunit interface close to the decoding center, probably blocks exit of the E-site tRNA. In Brucella melitensis biotype 1 (strain ATCC 23456 / CCUG 17765 / NCTC 10094 / 16M), this protein is Small ribosomal subunit protein uS7.